The chain runs to 96 residues: MNRWLAAGGILLGALVVFSFVSAGAWGGADGVAGDTITTINPSYEPWFQSLWTPPSGEIESLLFSIQAAVGGIIIGYYLGRDRPRGQSQDMGSDLP.

Transmembrane regions (helical) follow at residues 4 to 24 (WLAAGGILLGALVVFSFVSAG) and 59 to 79 (IESLLFSIQAAVGGIIIGYYL).

It belongs to the CbiN family. In terms of assembly, forms an energy-coupling factor (ECF) transporter complex composed of an ATP-binding protein (A component, CbiO), a transmembrane protein (T component, CbiQ) and 2 possible substrate-capture proteins (S components, CbiM and CbiN) of unknown stoichimetry.

It is found in the cell membrane. It participates in cofactor biosynthesis; adenosylcobalamin biosynthesis. In terms of biological role, part of the energy-coupling factor (ECF) transporter complex CbiMNOQ involved in cobalt import. This Halobacterium salinarum (strain ATCC 29341 / DSM 671 / R1) protein is Cobalt transport protein CbiN.